Consider the following 772-residue polypeptide: Annulin (772 aa).

S-palmitoyl cysteine attachment occurs at residues cysteine 4 and cysteine 5. Positions 15–57 are disordered; the sequence is NEGSGGGIPLMPVRGGSTRRPDSLPKPPAAVVPSPPSPGDVPD. The span at 38–53 shows a compositional bias: pro residues; it reads LPKPPAAVVPSPPSPG. Residues histidine 400 and aspartate 427 contribute to the active site. Residues asparagine 467, aspartate 469, glutamate 517, and glutamate 522 each contribute to the Ca(2+) site.

This sequence belongs to the transglutaminase superfamily. Transglutaminase family. It depends on Ca(2+) as a cofactor. In terms of tissue distribution, has an annular, or ring-like expression pattern in epithelial annuli of developing limb segment boundary cells. In embryos, it is seen in gastrulating cells, in cells surrounding rapidly dividing neuroblasts, and in muscle pioneer cells invaginating to form apodemes.

Its subcellular location is the cell membrane. The enzyme catalyses L-glutaminyl-[protein] + L-lysyl-[protein] = [protein]-L-lysyl-N(6)-5-L-glutamyl-[protein] + NH4(+). Its function is as follows. Participates in morphogenetic activities of the cells, maybe by stabilizing the membrane or subcortical structures of cells that are under mechanical stress. Probably catalyzes the cross-linking of proteins and the conjugation of polyamines to proteins. This Schistocerca americana (American grasshopper) protein is Annulin.